The primary structure comprises 732 residues: Probable boron transporter 3 (732 aa).

Residue Met-1 is modified to N-acetylmethionine. Residues Met-1 to Arg-37 lie on the Cytoplasmic side of the membrane. The helical transmembrane segment at Ile-38–Glu-58 threads the bilayer. The Extracellular portion of the chain corresponds to Gln-59–Thr-77. The chain crosses the membrane as a helical span at residues Ala-78–Ala-98. Topologically, residues Glu-99 to Phe-123 are cytoplasmic. Residues Leu-124–Leu-144 form a helical membrane-spanning segment. The Extracellular segment spans residues Gly-145–Ala-157. Residues Gly-158–Val-178 traverse the membrane as a helical segment. Topologically, residues Asp-179 to Ala-197 are cytoplasmic. Residues Trp-198–Leu-218 form a helical membrane-spanning segment. The Extracellular portion of the chain corresponds to Lys-219 to Arg-234. Residues Gly-235–Ile-255 traverse the membrane as a helical segment. Over Pro-256–Val-291 the chain is Cytoplasmic. The helical transmembrane segment at Pro-292–Phe-312 threads the bilayer. Over Asp-313–Phe-339 the chain is Extracellular. Residues Leu-340–Ile-360 traverse the membrane as a helical segment. Residues Pro-361 to Arg-463 are Cytoplasmic-facing. A helical membrane pass occupies residues Val-464–Lys-484. Residues Arg-485–Cys-556 are Extracellular-facing. A helical transmembrane segment spans residues Phe-557–Val-577. At Pro-578–Val-732 the chain is on the cytoplasmic side. A disordered region spans residues Gly-695–Val-732.

This sequence belongs to the anion exchanger (TC 2.A.31.3) family.

Its subcellular location is the membrane. In terms of biological role, probable boron transporter. Boron is essential for maintaining the integrity of plants cell walls. This Arabidopsis thaliana (Mouse-ear cress) protein is Probable boron transporter 3 (BOR3).